A 336-amino-acid chain; its full sequence is MLYPLIKQALFQLDPERAHELTFQQLKRITGTPLEWLVRQSVPTKTVNCMGIAFKNPLGLAAGLDKDGDCIDALGAMGFGFIEVGTVTPRAQPGNEKPRLFRLVKAGGLINRMGFNNHGVDNLVENVRKSHFGGVLGINIGKNKDTPVEQGKDDYLTCMEKVYPYAGYIAVNISSPNTPGLRTLQFGEALDDLLLAIKNKQVALQAYHHKYVPVAVKIAPDMTEAELIQVADSLVRHNIDGVIATNTTTGRVLVQGMNHCGQTGGLSGRPLQLRSTEVIRQLSAELQGKLPIIGGGGIDSLIAAREKMAAGASLIQIYSGFIFHGPRLIKDIVSDI.

FMN-binding positions include 62–66 (AGLDK) and threonine 86. Position 66 (lysine 66) interacts with substrate. Residue 111–115 (NRMGF) coordinates substrate. 2 residues coordinate FMN: asparagine 139 and asparagine 172. Asparagine 172 is a substrate binding site. Catalysis depends on serine 175, which acts as the Nucleophile. Position 177 (asparagine 177) interacts with substrate. FMN is bound by residues lysine 217 and threonine 245. 246–247 (NT) serves as a coordination point for substrate. Residues glycine 268, glycine 297, and 318–319 (YS) contribute to the FMN site.

This sequence belongs to the dihydroorotate dehydrogenase family. Type 2 subfamily. As to quaternary structure, monomer. FMN serves as cofactor.

The protein localises to the cell membrane. It catalyses the reaction (S)-dihydroorotate + a quinone = orotate + a quinol. Its pathway is pyrimidine metabolism; UMP biosynthesis via de novo pathway; orotate from (S)-dihydroorotate (quinone route): step 1/1. Functionally, catalyzes the conversion of dihydroorotate to orotate with quinone as electron acceptor. This is Dihydroorotate dehydrogenase (quinone) from Sodalis glossinidius (strain morsitans).